Reading from the N-terminus, the 136-residue chain is MLQPKRTKFRKVHKGRNRGLAQGTDVSFGTFGLKAVGRGRLTARQIEAARRAMTRAVKRQGKIWIRVFPDKPITEKPLEVRMGKGKGNVEYWVALIQPGKVLYEMDGVPEELAREAFKLAAAKLPIKTTFVTKTVM.

Belongs to the universal ribosomal protein uL16 family. In terms of assembly, part of the 50S ribosomal subunit.

Its function is as follows. Binds 23S rRNA and is also seen to make contacts with the A and possibly P site tRNAs. This Erwinia tasmaniensis (strain DSM 17950 / CFBP 7177 / CIP 109463 / NCPPB 4357 / Et1/99) protein is Large ribosomal subunit protein uL16.